Consider the following 60-residue polypeptide: Metallothionein A (60 aa).

A beta region spans residues 1-28; it reads MDPCQCSKSGTCNCGGSCTCTNCSCKSC. Residues Cys4, Cys6, Cys12, Cys14, Cys18, Cys20, Cys23, Cys25, Cys28, Cys32, Cys33, Cys35, Cys36, Cys40, Cys43, Cys47, Cys49, Cys54, Cys58, and Cys59 each coordinate a divalent metal cation. The interval 29–60 is alpha; that stretch reads KKSCCPCCPSGCTKCASGCVCKGKTCDTSCCQ.

Belongs to the metallothionein superfamily. Type 1 family.

Functionally, metallothioneins have a high content of cysteine residues that bind various heavy metals. The protein is Metallothionein A (mta) of Trematomus bernacchii (Emerald rockcod).